The chain runs to 281 residues: MSFVIATFYHFVKLSNYYDMKDEIKVACDNVELKGTILLAEEGINATVSGERNAIDKIFDFLRSDYRLRDLTWKESAAEYQPFSKMKVRLKREIVNLGVSNLDTSVRGQYIDPDYWDDFISQPDVLVIDTRNDYEVKLGKFKNAINPHTQRFRDFPQWAESFSESKDLKVAMYCTGGIRCEKSTAYMKSLGFNDVYHLKGGILSYLEKTHNKSGNWEGECFVFDDRIAVDHSLAPSDKIKCIFCSSKVSTDELKSVPRGQVVCSDCKSLSIERKLEFNTNL.

The 94-residue stretch at 121 to 214 folds into the Rhodanese domain; sequence SQPDVLVIDT…YLEKTHNKSG (94 aa). The active-site Cysteine persulfide intermediate is C174.

This sequence belongs to the TrhO family.

It catalyses the reaction uridine(34) in tRNA + AH2 + O2 = 5-hydroxyuridine(34) in tRNA + A + H2O. Its function is as follows. Catalyzes oxygen-dependent 5-hydroxyuridine (ho5U) modification at position 34 in tRNAs. The sequence is that of tRNA uridine(34) hydroxylase from Wolbachia pipientis subsp. Culex pipiens (strain wPip).